A 199-amino-acid chain; its full sequence is Chaperone protein TorD (199 aa).

Belongs to the TorD/DmsD family. TorD subfamily.

It is found in the cytoplasm. In terms of biological role, involved in the biogenesis of TorA. Acts on TorA before the insertion of the molybdenum cofactor and, as a result, probably favors a conformation of the apoenzyme that is competent for acquiring the cofactor. The chain is Chaperone protein TorD from Escherichia coli O6:H1 (strain CFT073 / ATCC 700928 / UPEC).